Here is a 397-residue protein sequence, read N- to C-terminus: Phosphoglycerate kinase (397 aa).

Substrate is bound by residues 25 to 27 (DLN), Arg-41, 64 to 67 (HLGR), Arg-118, and Arg-151. ATP contacts are provided by residues Lys-202, Glu-324, and 350 to 353 (GGDT).

This sequence belongs to the phosphoglycerate kinase family. In terms of assembly, monomer.

The protein localises to the cytoplasm. It catalyses the reaction (2R)-3-phosphoglycerate + ATP = (2R)-3-phospho-glyceroyl phosphate + ADP. Its pathway is carbohydrate degradation; glycolysis; pyruvate from D-glyceraldehyde 3-phosphate: step 2/5. The sequence is that of Phosphoglycerate kinase from Herminiimonas arsenicoxydans.